A 271-amino-acid chain; its full sequence is Aquaporin-11 (271 aa).

Residues methionine 1–threonine 14 are Cytoplasmic-facing. The helical transmembrane segment at cysteine 15 to alanine 35 threads the bilayer. Over arginine 36–arginine 41 the chain is Lumenal. A helical transmembrane segment spans residues proline 42–histidine 62. Residues glutamate 63–histidine 74 are Cytoplasmic-facing. A helical membrane pass occupies residues proline 75 to glycine 95. Residues threonine 96–leucine 163 are Lumenal-facing. The NPC motif lies at asparagine 99–cysteine 101. A helical membrane pass occupies residues leucine 164–phenylalanine 184. Residues glutamine 185–histidine 194 lie on the Cytoplasmic side of the membrane. Residues leucine 195–phenylalanine 215 traverse the membrane as a helical segment. The NPA signature appears at asparagine 216–alanine 218. The Lumenal segment spans residues asparagine 216–glutamine 234. Residues phenylalanine 235 to serine 255 form a helical membrane-spanning segment. The Cytoplasmic portion of the chain corresponds to phenylalanine 256–glutamate 271.

It belongs to the MIP/aquaporin (TC 1.A.8) family. AQP11/AQP12 subfamily. In terms of assembly, homodimer; disulfide-linked. Homotetramer. Can also form homomultimer. Not glycosylated. As to expression, detected in the sperm head and tail (at protein level). Expressed in subcutaneous adipocytes. Expressed in testis, kidney and ejaculated spermatozoa.

It is found in the endoplasmic reticulum membrane. It localises to the cytoplasmic vesicle membrane. The protein resides in the cell membrane. The enzyme catalyses H2O(in) = H2O(out). It carries out the reaction glycerol(in) = glycerol(out). The catalysed reaction is H2O2(out) = H2O2(in). Its function is as follows. Channel protein that facilitates the transport of water, glycerol and hydrogen peroxide across membrane of cell or organelles guaranteeing intracellular homeostasis in several organes like liver, kidney and brain. In situation of stress, participates in endoplasmic reticulum (ER) homeostasis by regulating redox homeostasis through the transport of hydrogen peroxide across the endoplasmic reticulum membrane thereby regulating the oxidative stress through the NADPH oxidase 2 pathway. Plays a role by maintaining an environment suitable for translation or protein foldings in the ER lumen namely by participating in the PKD1 glycosylation processing resulting in regulation of PKD1 membrane trafficking thereby preventing the accumulation of unfolding protein in ER. Plays a role in the proximal tubule function by regulating its endosomal acidification. May play a role in postnatal kidney development. This chain is Aquaporin-11, found in Homo sapiens (Human).